We begin with the raw amino-acid sequence, 196 residues long: Guanylate kinase (196 aa).

In terms of domain architecture, Guanylate kinase-like spans 8 to 189; sequence GKIIIISGPS…AADKLRHILY (182 aa). 15-22 contributes to the ATP binding site; the sequence is GPSGVGKK.

It belongs to the guanylate kinase family.

Its subcellular location is the cytoplasm. It catalyses the reaction GMP + ATP = GDP + ADP. Essential for recycling GMP and indirectly, cGMP. This is Guanylate kinase from Malacoplasma penetrans (strain HF-2) (Mycoplasma penetrans).